The following is a 78-amino-acid chain: MRNLINFAVLIMTIFIVSASGARETRMMEQTCPVFWPMVPCDANKCEQMCRDYYGSVPSYCNRIGTPIAECACSLTPC.

The N-terminal stretch at 1–22 is a signal peptide; it reads MRNLINFAVLIMTIFIVSASGA. 4 disulfide bridges follow: cysteine 32–cysteine 78, cysteine 41–cysteine 61, cysteine 46–cysteine 71, and cysteine 50–cysteine 73.

It belongs to the DEFL family.

It localises to the secreted. This Arabidopsis thaliana (Mouse-ear cress) protein is Defensin-like protein 201.